Consider the following 153-residue polypeptide: MNIKIIVIGKIRNEFIKAGVNEYLKRLLPFINIKIEFLPSFSELSEKIALLKEEEIILKNLRNGEFIITLDKDGEKISSEEFSKKLFKLPISQNSQITFIIGGIYGVSEKIKQSSNFILSLSSMTFTHEFALLILLEQIYRALKIQRNEPYHY.

Residues Leu70, Gly102, and 121–126 (LSSMTF) contribute to the S-adenosyl-L-methionine site.

Belongs to the RNA methyltransferase RlmH family. Homodimer.

The protein resides in the cytoplasm. The enzyme catalyses pseudouridine(1915) in 23S rRNA + S-adenosyl-L-methionine = N(3)-methylpseudouridine(1915) in 23S rRNA + S-adenosyl-L-homocysteine + H(+). Its function is as follows. Specifically methylates the pseudouridine at position 1915 (m3Psi1915) in 23S rRNA. This chain is Ribosomal RNA large subunit methyltransferase H, found in Dictyoglomus thermophilum (strain ATCC 35947 / DSM 3960 / H-6-12).